A 156-amino-acid chain; its full sequence is Small ribosomal subunit protein uS7c (156 aa).

Belongs to the universal ribosomal protein uS7 family. As to quaternary structure, part of the 30S ribosomal subunit.

Its subcellular location is the plastid. The protein resides in the chloroplast. One of the primary rRNA binding proteins, it binds directly to 16S rRNA where it nucleates assembly of the head domain of the 30S subunit. This Bowenia serrulata (Byfield fern) protein is Small ribosomal subunit protein uS7c (rps7).